Consider the following 120-residue polypeptide: Ribonuclease P protein component (120 aa).

It belongs to the RnpA family. Consists of a catalytic RNA component (M1 or rnpB) and a protein subunit.

The catalysed reaction is Endonucleolytic cleavage of RNA, removing 5'-extranucleotides from tRNA precursor.. Functionally, RNaseP catalyzes the removal of the 5'-leader sequence from pre-tRNA to produce the mature 5'-terminus. It can also cleave other RNA substrates such as 4.5S RNA. The protein component plays an auxiliary but essential role in vivo by binding to the 5'-leader sequence and broadening the substrate specificity of the ribozyme. The polypeptide is Ribonuclease P protein component (Azoarcus sp. (strain BH72)).